The following is a 430-amino-acid chain: ATP-dependent RNA helicase RhlB (430 aa).

Residues 9-37 (QKFSDFALHPQVIEALESKGFHNCTPIQA) carry the Q motif motif. Residues 40-219 (LPLALSGRDV…FEQMNNAEYV (180 aa)) enclose the Helicase ATP-binding domain. An ATP-binding site is contributed by 53 to 60 (AQTGTGKT). Residues 165 to 168 (DEAD) carry the DEAD box motif. Residues 245–390 (RLLQTLLEEE…VSKYNSDALM (146 aa)) form the Helicase C-terminal domain. Positions 392 to 430 (DLPAPKRLTRPPRSNNGPRRHNNAPRRSGAPRNNRKRAD) are disordered.

Belongs to the DEAD box helicase family. RhlB subfamily. Component of the RNA degradosome, which is a multiprotein complex involved in RNA processing and mRNA degradation.

It is found in the cytoplasm. It catalyses the reaction ATP + H2O = ADP + phosphate + H(+). In terms of biological role, DEAD-box RNA helicase involved in RNA degradation. Has RNA-dependent ATPase activity and unwinds double-stranded RNA. The protein is ATP-dependent RNA helicase RhlB of Pectobacterium carotovorum subsp. carotovorum (strain PC1).